Here is a 305-residue protein sequence, read N- to C-terminus: Olfactory receptor 4B13 (305 aa).

Over 1 to 25 the chain is Extracellular; the sequence is MANKNNVTELIFTGLFQDPEVQKVC. An N-linked (GlcNAc...) asparagine glycan is attached at Asn-6. Residues 26–46 form a helical membrane-spanning segment; the sequence is FVLFLPVYLATLLGNSLILVA. The Cytoplasmic segment spans residues 47 to 55; sequence VSISKTLHS. Residues 56–76 form a helical membrane-spanning segment; sequence PMYFFLSSLSLVEICYSSTIV. The Extracellular portion of the chain corresponds to 77 to 95; the sequence is PKFITDLLAKVKTISLKGC. Cys-95 and Cys-187 form a disulfide bridge. A helical transmembrane segment spans residues 96 to 116; the sequence is LTQIFFSHFFGVVEVILLVVM. Residues 117-141 are Cytoplasmic-facing; the sequence is AYDRYVAICKPLHYMNIMSRQVCHM. A helical transmembrane segment spans residues 142 to 162; the sequence is LVAGSWLGGFIHSIIQIIITI. Topologically, residues 163-202 are extracellular; the sequence is PLPFCGPNVIDHYFCDLQQLFKLACTDTFMEGFIVMANSG. A helical membrane pass occupies residues 203–223; the sequence is LISIVSLFILVSSYAVILISL. Residues 224 to 236 are Cytoplasmic-facing; sequence RKRSAEGRRKALS. The helical transmembrane segment at 237–257 threads the bilayer; the sequence is TCASHITVVILFFVPGAFIYM. Residues 258 to 266 lie on the Extracellular side of the membrane; it reads RPSSTFTED. A helical transmembrane segment spans residues 267–287; sequence KLVSVFYTVITPMLNPIVYTL. At 288-305 the chain is on the cytoplasmic side; that stretch reads RNTEMKNAIRMSWKQKDS.

Belongs to the G-protein coupled receptor 1 family.

The protein localises to the cell membrane. Functionally, odorant receptor. This chain is Olfactory receptor 4B13, found in Mus musculus (Mouse).